A 1984-amino-acid chain; its full sequence is Sodium channel protein type 9 subunit alpha (1984 aa).

Over 1 to 125 (MAMLPPPGPQ…RRISIKILVH (125 aa)) the chain is Cytoplasmic. Residues 26–39 (RISEEKAKGHKDEK) are compositionally biased toward basic and acidic residues. The disordered stretch occupies residues 26-55 (RISEEKAKGHKDEKKDDEEEGPKPSSDLEA). The stretch at 112-410 (FSPLRRISIK…VAMAYEEQNQ (299 aa)) is one I repeat. Residues 126 to 145 (SLFSMLIMCTILTNCIFMTM) traverse the membrane as a helical segment. Over 146-150 (SNPPD) the chain is Extracellular. The chain crosses the membrane as a helical span at residues 151 to 172 (WTKNVEYTFTGIYTFESLIKIL). Residues 173–185 (ARGFCVGEFTFLR) lie on the Cytoplasmic side of the membrane. The chain crosses the membrane as a helical span at residues 186 to 204 (DPWNWLDFVVIVFAYLTEF). Topologically, residues 205 to 210 (VNLGNV) are extracellular. A helical transmembrane segment spans residues 211–227 (SALRTFRVLRALKTISV). The Cytoplasmic segment spans residues 228-241 (IPGLKTIVGALIQS). Residues 242–267 (VKKLSDVMILTVFCLSVFALIGLQLF) form a helical membrane-spanning segment. Residues 268–346 (MGNLKHKCFR…PDYGYTSFDT (79 aa)) lie on the Extracellular side of the membrane. C275 and C324 are joined by a disulfide. The segment at residues 347–363 (FGWAFLALFRLMTQDYW) is an intramembrane region (pore-forming). The Extracellular portion of the chain corresponds to 364–376 (ENLYQQTLRAAGK). The chain crosses the membrane as a helical span at residues 377–402 (TYMIFFVVVIFLGSFYLINLILAVVA). Residues 402-449 (AMAYEEQNQANIEEAKQKELEFQQMLDRLKKEQEEAEAIAAAAAEYTS) adopt a coiled-coil conformation. Residues 403-744 (MAYEEQNQAN…FIYFIVMDPF (342 aa)) are Cytoplasmic-facing. Residues 458–471 (LSESSSETSRLSSK) show a composition bias toward low complexity. 2 disordered regions span residues 458–540 (LSES…SIRG) and 574–609 (HSIFGDNESRRGSLFVPHRPRERRSSNISQASRSPP). Positions 474–486 (KERRNRRKKKKQK) are enriched in basic residues. 2 stretches are compositionally biased toward basic and acidic residues: residues 489 to 509 (SGEEKGDDEKLSKSGSEESIR) and 574 to 584 (HSIFGDNESRR). A coiled-coil region spans residues 684–708 (LRQRAMSRASILTNTVEELEESRQK). The II repeat unit spans residues 725-988 (CSPYWIKFKK…EEDTDANNLQ (264 aa)). The chain crosses the membrane as a helical span at residues 745 to 761 (VDLAITICIVLNTLFMA). Residues 762–770 (MEHHPMTDE) are Extracellular-facing. The chain crosses the membrane as a helical span at residues 771 to 795 (FKNVLAVGNLVFTGIFAAEMVLKLI). Residues 796–804 (AMDPYEYFQ) lie on the Cytoplasmic side of the membrane. A helical transmembrane segment spans residues 805–821 (VGWNIFDSLIVTLSLVE). Over 822-830 (LFLADVEGL) the chain is Extracellular. A helical membrane pass occupies residues 831–847 (SVLRSFRLLRVFKLAKS). Over 848 to 864 (WPTLNMLIKIIGNSVGA) the chain is Cytoplasmic. The helical transmembrane segment at 865-887 (LGNLTLVLAIIVFIFAVVGMQLF) threads the bilayer. Residues 888–914 (GKSYKECVCKINENCKLPRWHMNDFFH) lie on the Extracellular side of the membrane. The cysteines at positions 896 and 902 are disulfide-linked. An intramembrane region (pore-forming) is located at residues 915–927 (SFLIVFRVLCGEW). Residues 928–939 (IETMWDCMEVAG) lie on the Extracellular side of the membrane. C934 and C943 are oxidised to a cystine. The chain crosses the membrane as a helical span at residues 940 to 966 (QTMCLIVYMMVMVIGNLVVLNLFLALL). The Cytoplasmic portion of the chain corresponds to 967–1185 (LSSFSSDNLT…WWTIRKTCYR (219 aa)). 2 disordered regions span residues 1015–1039 (KKPKGSKDTKRTADPNNKRENYISN) and 1089–1145 (PIAP…EPIN). Over residues 1019-1035 (GSKDTKRTADPNNKREN) the composition is skewed to basic and acidic residues. Acidic residues predominate over residues 1135–1145 (GEEEAEAEPIN). One copy of the III repeat lies at 1178–1486 (TIRKTCYRIV…KKYYNAMKKL (309 aa)). Residues 1186-1210 (IVEHSWFESFIVLMILLSSGALAFE) form a helical membrane-spanning segment. The Extracellular portion of the chain corresponds to 1211–1222 (DIYIEKKKTIKI). The helical transmembrane segment at 1223 to 1248 (ILEYADKIFTYIFILEMLLKWVAYGY) threads the bilayer. Over 1249-1250 (KT) the chain is Cytoplasmic. A helical membrane pass occupies residues 1251–1276 (YFTNAWCWLDFLIVDVSLVTLVANTL). Over 1277-1285 (GYSDLGPIK) the chain is Extracellular. The chain crosses the membrane as a helical span at residues 1286-1302 (SLRTLRALRPLRALSRF). The Cytoplasmic portion of the chain corresponds to 1303–1315 (EGMRVVVNALIGA). A helical transmembrane segment spans residues 1316–1340 (IPSIMNVLLVCLIFWLIFSIMGVNL). Over 1341–1392 (FAGKFYECVNTTDGSRFSVSQVANRSECFALMNVSGNVRWKNLKVNFDNVGL) the chain is Extracellular. A disulfide bond links C1348 and C1368. An intramembrane region (pore-forming) is located at residues 1393-1403 (GYLSLLQVATF). At 1404–1429 (KGWMDIMYAAVDSVNVNAQPIYEYNL) the chain is on the extracellular side. The chain crosses the membrane as a helical span at residues 1430–1455 (YMYIYFVIFIIFGSFFTLNLFIGVII). Residues 1456 to 1512 (DNFNQQKKKLGGQDIFMTEEQKKYYNAMKKLGSKKPQKPIPRPGNKFQGCIFDLVTN) are Cytoplasmic-facing. A Phosphoserine; by PKC modification is found at S1488. An IV repeat occupies 1495 to 1793 (IPRPGNKFQG…WEKFDPDATQ (299 aa)). A helical transmembrane segment spans residues 1513–1532 (QAFDITIMVLICLNMVTMMV). The Extracellular segment spans residues 1533-1543 (EKEGQTDYMSF). Residues 1544 to 1565 (VLYWINVVFIILFTGECVLKLI) form a helical membrane-spanning segment. The Cytoplasmic portion of the chain corresponds to 1566-1574 (SLRHYYFTV). The chain crosses the membrane as a helical span at residues 1575–1596 (GWNIFDFVVVILSIVGMFLAEM). The Extracellular segment spans residues 1597 to 1605 (IEKYFVSPT). The helical transmembrane segment at 1606-1625 (LFRVIRLARIGRILRLIKGA) threads the bilayer. At 1626–1638 (KGIRTLLFALMMS) the chain is on the cytoplasmic side. A helical membrane pass occupies residues 1639–1661 (LPALFNIGLLLFLVMFIYAIFGM). Over 1662–1684 (SNFAYVKKEAGINDMFNFETFGN) the chain is Extracellular. Positions 1685-1697 (SMICLFQITTSAG) form an intramembrane region, pore-forming. The Extracellular portion of the chain corresponds to 1698–1731 (WDGLLAPILNSAPPDCDPKKVHPGSSVEGDCGNP). An intrachain disulfide couples C1713 to C1728. The helical transmembrane segment at 1732–1757 (SVGIFYFVSYIIISFLVVVNMYIAVI) threads the bilayer. Residues 1758–1984 (LENFSVATEE…EDKEKDESRK (227 aa)) lie on the Cytoplasmic side of the membrane. Residues 1887–1916 (EDVSATIIQRAYRRYRLRQNVKNISSIYIK) form the IQ domain. The segment at 1933-1984 (DNVNENSSPEKTDATASTISPPSYDSVTKPDQEKYETDKTEKEDKEKDESRK) is disordered. Polar residues predominate over residues 1946 to 1958 (ATASTISPPSYDS). Residues 1960–1984 (TKPDQEKYETDKTEKEDKEKDESRK) are compositionally biased toward basic and acidic residues.

Belongs to the sodium channel (TC 1.A.1.10) family. Nav1.7/SCN9A subfamily. In terms of assembly, the Nav1.7 voltage-gated sodium channel consists of an ion-conducting alpha subunit SCN9A which is functional on its own regulated by one or more beta-1 (SCN1B), beta-2 (SCN2B), beta-3 (SCN3B) and beta-4 (SCN4B) subunits. SCN1B and SCN3B are non-covalently associated with SCN9A. SCN2B and SCN4B are disulfide-linked to SCN9A. SCN1B regulates channel inactivation. Interacts with NEDD4 and NEDD4L; regulates Nav1.7 activity most probably through ubiquitination and subsequent endocytosis. Interacts with TMEM233; modulates the gating properties of NaV1.7. Ubiquitinated by NEDD4L; which may promote its endocytosis. In terms of processing, phosphorylation at Ser-1488 by PKC in a highly conserved cytoplasmic loop increases peak sodium currents. Expressed strongly in sciatic nerves, with moderate levels in kidney. Not detected in liver, brain and muscle.

The protein localises to the cell membrane. It localises to the cell projection. It is found in the neuron projection. Its subcellular location is the axon. The enzyme catalyses Na(+)(in) = Na(+)(out). Functionally, pore-forming subunit of Nav1.7, a voltage-gated sodium (Nav) channel that directly mediates the depolarizing phase of action potentials in excitable membranes. Navs, also called VGSCs (voltage-gated sodium channels) or VDSCs (voltage-dependent sodium channels), operate by switching between closed and open conformations depending on the voltage difference across the membrane. In the open conformation they allow Na(+) ions to selectively pass through the pore, along their electrochemical gradient. The influx of Na(+) ions provokes membrane depolarization, initiating the propagation of electrical signals throughout cells and tissues. Nav1.7 plays a crucial role in controlling the excitability and action potential propagation from nociceptor neurons, thereby contributing to the sensory perception of pain. The protein is Sodium channel protein type 9 subunit alpha of Mus musculus (Mouse).